A 555-amino-acid polypeptide reads, in one-letter code: Probable metabolite transport protein YDR387C (555 aa).

Residues 1 to 39 are Cytoplasmic-facing; it reads MSTDESEDVYSDLYSIISQVTSNTANDIEQLPYALTFKT. Residues 40–60 traverse the membrane as a helical segment; sequence SLIFVGATIGGLLFGYDTGVI. The Extracellular portion of the chain corresponds to 61–83; that stretch reads SGVLLSLKPEDLSLVVLTDVQKE. A helical membrane pass occupies residues 84-104; it reads LITSSTSVGSFFGSILAFPLA. Topologically, residues 105 to 118 are cytoplasmic; the sequence is DRYGRRITLAICCS. A helical transmembrane segment spans residues 119-139; it reads IFILAAIGMAIARTLTFLICG. A topological domain (extracellular) is located at residue Arg140. The helical transmembrane segment at 141-161 threads the bilayer; that stretch reads LLVGIAVGVSAQCVPLFLSEI. At 162–168 the chain is on the cytoplasmic side; it reads SPSRIRG. Residues 169–189 form a helical membrane-spanning segment; the sequence is FMLTLNIIAITGGQLVSYVIA. Topologically, residues 190 to 200 are extracellular; sequence SLMKEIDNSWR. Residues 201–221 traverse the membrane as a helical segment; it reads YLFALSAIPAILFLSILDFIP. The Cytoplasmic portion of the chain corresponds to 222 to 356; sequence ESPRWSISKG…TIRALIVGCM (135 aa). The segment at 289–313 is disordered; that stretch reads SSTSGTLSPPNIKRLSSNTERTSNT. A helical membrane pass occupies residues 357–377; it reads LMFFQQITGFNAFMYYAAIIF. The Extracellular portion of the chain corresponds to 378–384; the sequence is SKFNIKN. Residues 385–405 form a helical membrane-spanning segment; the sequence is PLLPPILIASTNFIFTFFAMY. Residues 406–413 lie on the Cytoplasmic side of the membrane; that stretch reads TMDSLGRR. Residues 414-434 form a helical membrane-spanning segment; the sequence is AILLRTILIMTVGLLLCSVGF. Over 435–440 the chain is Extracellular; the sequence is GHDQVN. The chain crosses the membrane as a helical span at residues 441 to 461; it reads LLLISVVIYVAAYASAMGSVP. The Cytoplasmic portion of the chain corresponds to 462–474; the sequence is WTCVEFLPLNRRS. A helical membrane pass occupies residues 475-497; that stretch reads FGASCIACTNWLTNAFVSMTYLS. At 498-506 the chain is on the extracellular side; the sequence is TINTIGDEN. The chain crosses the membrane as a helical span at residues 507–527; sequence TMLIFAFFTVCAWFFVYFWYP. Residues 528 to 555 are Cytoplasmic-facing; that stretch reads EVKGLSLEEVGRVFDNGIDVHYVFRTYH.

The protein belongs to the major facilitator superfamily. Sugar transporter (TC 2.A.1.1) family.

Its subcellular location is the membrane. The polypeptide is Probable metabolite transport protein YDR387C (Saccharomyces cerevisiae (strain ATCC 204508 / S288c) (Baker's yeast)).